An 88-amino-acid polypeptide reads, in one-letter code: UPF0223 protein OB1419 (88 aa).

Belongs to the UPF0223 family.

This is UPF0223 protein OB1419 from Oceanobacillus iheyensis (strain DSM 14371 / CIP 107618 / JCM 11309 / KCTC 3954 / HTE831).